A 277-amino-acid polypeptide reads, in one-letter code: Collectin-10 (277 aa).

Residues 1–27 (MSRKKEQQLRKYGTLVVLFIFQVQIFG) form the signal peptide. The segment at 41 to 82 (THTILPGPKGDDGEKGDRGEVGKQGKVGPKGPKGNKGTVGDV) is disordered. Positions 49–63 (KGDDGEKGDRGEVGK) are enriched in basic and acidic residues. The Collagen-like domain occupies 56 to 115 (GDRGEVGKQGKVGPKGPKGNKGTVGDVGDQGMLGKIGPIGGKGDKGAKGISGVSGKKGKA). Residues 64–79 (QGKVGPKGPKGNKGTV) are compositionally biased toward low complexity. In terms of domain architecture, C-type lectin spans 155–271 (TDEKFYYIVK…CQVTIYFICE (117 aa)). Intrachain disulfides connect Cys-176–Cys-270 and Cys-248–Cys-262. Residue Asn-258 is glycosylated (N-linked (GlcNAc...) asparagine).

This sequence belongs to the COLEC10/COLEC11 family. Widely expressed. Highly expressed in lung. Weakly expressed in larynx, syrinx and cranial air sac. Expressed throughout the lower gastrointestinal tract in increasing levels starting from a faint signal in duodenum and ending with relatively high signals in proctodeum, coprodeum and urodeum. In the upper part of the gastrointestinal tract, expressed in tongue, crop, and mucosa of the crop.

Its subcellular location is the secreted. It is found in the golgi apparatus. It localises to the cytoplasm. In terms of biological role, lectin that binds to various sugars: galactose &gt; mannose = fucose &gt; N-acetylglucosamine &gt; N-acetylgalactosamine. Acts as a chemoattractant, probably involved in the regulation of cell migration. This chain is Collectin-10 (COLEC10), found in Gallus gallus (Chicken).